Reading from the N-terminus, the 397-residue chain is Purine ribonucleoside efflux pump NepI (397 aa).

At 1 to 21 (MNENIAEKFRADGVARPNWSA) the chain is on the cytoplasmic side. Residues 22-42 (VFAVAFCVACLITVEFLPVSL) form a helical membrane-spanning segment. Over 43 to 54 (LTPMAQDLGISE) the chain is Periplasmic. A helical transmembrane segment spans residues 55 to 75 (GVAGQSVTVTAFVAMFSSLFI). The Cytoplasmic segment spans residues 76–85 (TQIIQATDRR). The chain crosses the membrane as a helical span at residues 86–106 (YIVILFAVLLTASCLMVSFAN). A topological domain (periplasmic) is located at residue serine 107. A helical transmembrane segment spans residues 108 to 128 (FTLLLLGRACLGLALGGFWAM). Topologically, residues 129 to 147 (SASLTMRLVPARTVPKALS) are cytoplasmic. Residues 148–168 (VIFGAVSIALVIAAPLGSFLG) traverse the membrane as a helical segment. The Periplasmic segment spans residues 169–175 (GIIGWRN). The helical transmembrane segment at 176–196 (VFNAAAVMGVLCVIWVVKSLP) threads the bilayer. Over 197–215 (SLPGEPSHQKQNMFSLLQR) the chain is Cytoplasmic. A helical membrane pass occupies residues 216-236 (PGVMAGMIAIFMSFAGQFAFF). The Periplasmic portion of the chain corresponds to 237-255 (TYIRPVYMNLAGFDVDGLT). Residues 256 to 276 (LVLLSFGIASFVGTSFSSYVL) form a helical membrane-spanning segment. Topologically, residues 277–281 (KRSVK) are cytoplasmic. A helical membrane pass occupies residues 282 to 302 (LALAGAPLLLALSALTLIVWG). Residues 303-305 (SDK) lie on the Periplasmic side of the membrane. Residues 306–326 (TVAAAIAIIWGLAFALVPVGW) form a helical membrane-spanning segment. The Cytoplasmic segment spans residues 327 to 343 (STWITRSLADQAEKAGS). A helical transmembrane segment spans residues 344-364 (IQVAVIQLANTCGAAVGGYAL). The Periplasmic segment spans residues 365–366 (DN). A helical membrane pass occupies residues 367–387 (FGLLSPLALSGGLMLLTALVV). The Cytoplasmic portion of the chain corresponds to 388 to 397 (AAKVRITPMS).

It belongs to the major facilitator superfamily. DHA1 family. NepI (TC 2.A.1.2.26) subfamily.

It localises to the cell inner membrane. The catalysed reaction is inosine(in) + H(+)(out) = inosine(out) + H(+)(in). It carries out the reaction guanosine(in) + H(+)(out) = guanosine(out) + H(+)(in). Involved in the efflux of purine ribonucleosides, such as inosine and guanosine. The sequence is that of Purine ribonucleoside efflux pump NepI from Salmonella choleraesuis (strain SC-B67).